We begin with the raw amino-acid sequence, 214 residues long: Large ribosomal subunit protein uL16-like (214 aa).

This sequence belongs to the universal ribosomal protein uL16 family. In terms of assembly, component of a male germ cell-specific 60S large ribosomal subunit (LSU), which contains RPL10L and RPL39L, instead of RPL10 and RPL39 paralogs. The composition of the rest of the complex is similar to classical ribosomes. In terms of tissue distribution, testis-specific.

It localises to the cytoplasm. Testis-specific component of the ribosome, which is required for the transition from prophase to metaphase in male meiosis I. Compensates for the inactivated X-linked RPL10 paralog during spermatogenesis. The ribosome is a large ribonucleoprotein complex responsible for the synthesis of proteins in the cell. The male germ cell-specific ribosome displays a ribosomal polypeptide exit tunnel of distinct size and charge states compared with the classical ribosome. It is responsible for regulating the biosynthesis and folding of a subset of male germ-cell-specific proteins that are essential for the formation of sperm. The polypeptide is Large ribosomal subunit protein uL16-like (Mus musculus (Mouse)).